Reading from the N-terminus, the 170-residue chain is Peptide deformylase (170 aa).

Fe cation contacts are provided by C91 and H133. E134 is a catalytic residue. H137 serves as a coordination point for Fe cation.

It belongs to the polypeptide deformylase family. The cofactor is Fe(2+).

The catalysed reaction is N-terminal N-formyl-L-methionyl-[peptide] + H2O = N-terminal L-methionyl-[peptide] + formate. Functionally, removes the formyl group from the N-terminal Met of newly synthesized proteins. Requires at least a dipeptide for an efficient rate of reaction. N-terminal L-methionine is a prerequisite for activity but the enzyme has broad specificity at other positions. The protein is Peptide deformylase of Aliivibrio fischeri (strain ATCC 700601 / ES114) (Vibrio fischeri).